The sequence spans 672 residues: tRNA 5-methylaminomethyl-2-thiouridine biosynthesis bifunctional protein MnmC (672 aa).

The tract at residues 1-243 (MTSITHAELG…KREMIAGCME (243 aa)) is tRNA (mnm(5)s(2)U34)-methyltransferase. An FAD-dependent cmnm(5)s(2)U34 oxidoreductase region spans residues 269–672 (IGGGIASAAL…LRKGKAITEL (404 aa)).

In the N-terminal section; belongs to the methyltransferase superfamily. tRNA (mnm(5)s(2)U34)-methyltransferase family. This sequence in the C-terminal section; belongs to the DAO family. FAD is required as a cofactor.

It localises to the cytoplasm. The enzyme catalyses 5-aminomethyl-2-thiouridine(34) in tRNA + S-adenosyl-L-methionine = 5-methylaminomethyl-2-thiouridine(34) in tRNA + S-adenosyl-L-homocysteine + H(+). Catalyzes the last two steps in the biosynthesis of 5-methylaminomethyl-2-thiouridine (mnm(5)s(2)U) at the wobble position (U34) in tRNA. Catalyzes the FAD-dependent demodification of cmnm(5)s(2)U34 to nm(5)s(2)U34, followed by the transfer of a methyl group from S-adenosyl-L-methionine to nm(5)s(2)U34, to form mnm(5)s(2)U34. The chain is tRNA 5-methylaminomethyl-2-thiouridine biosynthesis bifunctional protein MnmC from Vibrio vulnificus (strain CMCP6).